The primary structure comprises 556 residues: 2-methylpropanoate--CoA ligase CCL4 (556 aa).

ATP contacts are provided by residues 192–200, 325–330, Asp423, 435–438, and Lys531; these read TSGTTSSPK, HGYGLT, and IKDR. The segment at 260–325 is SBD1; sequence DSEIIYDMIK…TESLGFAVSH (66 aa). An SBD2 region spans residues 326-402; it reads GYGLTETAGL…LRGGSVMLGY (77 aa).

The protein belongs to the ATP-dependent AMP-binding enzyme family. Mostly expressed in old leaves and in cones and glandular trichomes (lupulin glands) after flowering, and, to a lower extent, in stems, young leaves and flowers.

The protein resides in the cytoplasm. The protein localises to the cytosol. The enzyme catalyses 2-methylpropanoate + ATP + CoA = 2-methylpropanoyl-CoA + AMP + diphosphate. The catalysed reaction is propanoate + ATP + CoA = propanoyl-CoA + AMP + diphosphate. It carries out the reaction butanoate + ATP + CoA = butanoyl-CoA + AMP + diphosphate. It catalyses the reaction 2-methylbutanoate + ATP + CoA = 2-methylbutanoyl-CoA + AMP + diphosphate. Its pathway is secondary metabolite biosynthesis. Involved in the biosynthesis of prenylated phenolics natural products which contribute to the bitter taste of beer and display broad biological activities. Catalyzes the ligation of CoA on 2-methylpropanoate (isobutyric acid) and 2-methylbutanoate to produce 2-methylpropanoyl-CoA and 2-methylbutanoyl-CoA, respectively. Can also use propanoate and butanoate as substrates with a lower efficiency. This Humulus lupulus (European hop) protein is 2-methylpropanoate--CoA ligase CCL4.